Consider the following 128-residue polypeptide: Glycine cleavage system H protein 2 (128 aa).

The Lipoyl-binding domain maps to 24 to 105 (TVTVGISDHA…PYSAWIFKVK (82 aa)). Lys65 is modified (N6-lipoyllysine).

It belongs to the GcvH family. The glycine cleavage system is composed of four proteins: P, T, L and H. The cofactor is (R)-lipoate.

The glycine cleavage system catalyzes the degradation of glycine. The H protein shuttles the methylamine group of glycine from the P protein to the T protein. The sequence is that of Glycine cleavage system H protein 2 from Pseudomonas syringae pv. tomato (strain ATCC BAA-871 / DC3000).